We begin with the raw amino-acid sequence, 625 residues long: Histone promoter control protein 2 (625 aa).

2 disordered regions span residues 1–164 and 295–437; these read MDQK…FAAK and APAE…VSPP. Residues 11–28 show a composition bias toward low complexity; the sequence is SKSGSKQTKSSGKMQTQT. A compositionally biased stretch (polar residues) spans 29–39; it reads DTNAEVLNTDN. 2 positions are modified to phosphoserine: Ser47 and Ser49. The span at 83-105 shows a compositional bias: low complexity; the sequence is SPSPIIISGSSSTSPSGPSSSST. Residues 113–135 are compositionally biased toward polar residues; it reads NRFNKNTVELYQHSPSPVMTTNK. The span at 136-154 shows a compositional bias: basic and acidic residues; it reads TDTEEKRQNNRNMDNKNTP. Polar residues predominate over residues 155-164; that stretch reads ERGSSSFAAK. Composition is skewed to low complexity over residues 305–321 and 330–355; these read SISS…SSKK and SSSA…NSSD. 2 stretches are compositionally biased toward polar residues: residues 363-381 and 404-415; these read SNKT…SKLN and GNSTEAKNSTSN. Ser435 carries the phosphoserine modification.

This sequence belongs to the HPC2 family. Component of the HIR complex, composed of HIR1, HIR2, HIR3 and HPC2. This complex may consist of one copy of HIR1 and HIR3 and two copies of HIR2 and HPC2. The HIR complex interacts with ASF1. Interacts with RTT106.

Its subcellular location is the nucleus. It is found in the chromosome. Its function is as follows. Component of the HIR complex, which functions as a histone chaperone that cooperates with ASF1 to promote replication-independent chromatin assembly. The HIR complex is also required for the periodic repression of three of the four histone gene loci during cell cycle as well as for autogenous regulation of the HTA1-HTB1 locus by H2A and H2B. DNA-binding by the HIR complex may repress transcription by inhibiting nucleosome remodeling by the SWI/SNF complex. The HIR complex may also be required for transcriptional silencing of centromeric, telomeric and mating-type loci in the absence of CAF-1. The chain is Histone promoter control protein 2 (HPC2) from Saccharomyces cerevisiae (strain ATCC 204508 / S288c) (Baker's yeast).